Consider the following 102-residue polypeptide: MNYINMKKIDEENKANSGDDTTESRKKQKTKNNEEHEIRSDELFRKSIFFDSHWNPNGVAPPNHRNVFYNPKTFVHRGKPIIAKLMDLDEEHLTKLISKTQK.

Residues 1 to 38 are disordered; it reads MNYINMKKIDEENKANSGDDTTESRKKQKTKNNEEHEI.

It belongs to the AIM4 family.

The protein resides in the cytoplasm. The chain is Altered inheritance of mitochondria protein 4 (AIM4) from Vanderwaltozyma polyspora (strain ATCC 22028 / DSM 70294 / BCRC 21397 / CBS 2163 / NBRC 10782 / NRRL Y-8283 / UCD 57-17) (Kluyveromyces polysporus).